A 104-amino-acid chain; its full sequence is Putative protein 22K (104 aa).

A disordered region spans residues 35-104 (YKQLEKELGE…KAPAAKAPSK (70 aa)). The span at 60–78 (PLSEGELEEISEEEEEEGE) shows a compositional bias: acidic residues. Over residues 94–104 (SKAPAAKAPSK) the composition is skewed to low complexity.

The polypeptide is Putative protein 22K (Snake adenovirus serotype 1 (SnAdV-1)).